We begin with the raw amino-acid sequence, 286 residues long: MPLVSMKEMLIDAKENGYAVGQYNINNLEFTQAILEASQEENAPVILGVSEGAARYMSGFYTIVKMVEGLMHDLNITIPVAIHLDHGSSFEKCKEAIDAGFTSVMIDASHSPFEENVATTKKVVEYAHEKGVSVEAELGTVGGQEDDVVADGIIYADPKECQELVEKTGIDALAPALGSVHGPYKGEPKLGFKEMEEIGLSTGLPLVLHGGTGIPTKDIQKAIPFGTAKINVNTENQIASAKAVRDVLNNDKEVYDPRKYLGPAREAIKETVKGKIKEFGTSNRAK.

Residue serine 50 coordinates D-glyceraldehyde 3-phosphate. Aspartate 85 functions as the Proton donor in the catalytic mechanism. Zn(2+) is bound by residues histidine 86, aspartate 107, glutamate 137, and histidine 181. Position 182 (glycine 182) interacts with dihydroxyacetone phosphate. Histidine 209 lines the Zn(2+) pocket. Residues 210 to 212 and 231 to 234 each bind dihydroxyacetone phosphate; these read GGT and NVNT.

The protein belongs to the class II fructose-bisphosphate aldolase family. Zn(2+) is required as a cofactor.

The enzyme catalyses beta-D-fructose 1,6-bisphosphate = D-glyceraldehyde 3-phosphate + dihydroxyacetone phosphate. The protein operates within carbohydrate degradation; glycolysis; D-glyceraldehyde 3-phosphate and glycerone phosphate from D-glucose: step 4/4. In terms of biological role, catalyzes the aldol condensation of dihydroxyacetone phosphate (DHAP or glycerone-phosphate) with glyceraldehyde 3-phosphate (G3P) to form fructose 1,6-bisphosphate (FBP) in gluconeogenesis and the reverse reaction in glycolysis. The protein is Fructose-bisphosphate aldolase (fba) of Staphylococcus aureus (strain MSSA476).